Consider the following 141-residue polypeptide: NADH-quinone oxidoreductase subunit A (141 aa).

The next 3 membrane-spanning stretches (helical) occupy residues 24–44 (LLAL…LLLA), 77–97 (VPFY…AFIA), and 106–126 (LGWA…VALI).

It belongs to the complex I subunit 3 family. In terms of assembly, NDH-1 is composed of 14 different subunits. Subunits NuoA, H, J, K, L, M, N constitute the membrane sector of the complex.

Its subcellular location is the cell inner membrane. It catalyses the reaction a quinone + NADH + 5 H(+)(in) = a quinol + NAD(+) + 4 H(+)(out). NDH-1 shuttles electrons from NADH, via FMN and iron-sulfur (Fe-S) centers, to quinones in the respiratory chain. The immediate electron acceptor for the enzyme in this species is believed to be ubiquinone. Couples the redox reaction to proton translocation (for every two electrons transferred, four hydrogen ions are translocated across the cytoplasmic membrane), and thus conserves the redox energy in a proton gradient. The polypeptide is NADH-quinone oxidoreductase subunit A (Syntrophotalea carbinolica (strain DSM 2380 / NBRC 103641 / GraBd1) (Pelobacter carbinolicus)).